The following is a 37-amino-acid chain: Large ribosomal subunit protein bL36 (37 aa).

Belongs to the bacterial ribosomal protein bL36 family.

This Clostridium perfringens (strain ATCC 13124 / DSM 756 / JCM 1290 / NCIMB 6125 / NCTC 8237 / Type A) protein is Large ribosomal subunit protein bL36.